The primary structure comprises 841 residues: Beta-adaptin-like protein A (841 aa).

2 disordered regions span residues 1–25 (MAPP…VSDL) and 650–671 (DENK…LESS). 2 stretches are compositionally biased toward polar residues: residues 9-25 (RYPS…VSDL) and 654-671 (GVSN…LESS).

The protein belongs to the adaptor complexes large subunit family. Adaptor protein complexes are heterotetramers composed of two large adaptins (beta-type subunit and alpha-type or delta-type or epsilon-type or gamma-type subunit), a medium adaptin (mu-type subunit) and a small adaptin (sigma-type subunit). Interacts with AHK2.

It is found in the golgi apparatus. The protein localises to the trans-Golgi network. Its subcellular location is the cytoplasmic vesicle. The protein resides in the clathrin-coated vesicle membrane. Its function is as follows. Subunit of clathrin-associated adaptor protein complex that plays a role in protein sorting in the late-Golgi/trans-Golgi network (TGN) and/or endosomes. The AP complexes mediate both the recruitment of clathrin to membranes and the recognition of sorting signals within the cytosolic tails of transmembrane cargo molecules. This Arabidopsis thaliana (Mouse-ear cress) protein is Beta-adaptin-like protein A (BETAA-AD).